Consider the following 253-residue polypeptide: Hydroxyacylglutathione hydrolase (253 aa).

Residues histidine 54, histidine 56, aspartate 58, histidine 59, histidine 112, aspartate 131, and histidine 169 each coordinate Zn(2+).

It belongs to the metallo-beta-lactamase superfamily. Glyoxalase II family. In terms of assembly, monomer. Requires Zn(2+) as cofactor.

The enzyme catalyses an S-(2-hydroxyacyl)glutathione + H2O = a 2-hydroxy carboxylate + glutathione + H(+). It participates in secondary metabolite metabolism; methylglyoxal degradation; (R)-lactate from methylglyoxal: step 2/2. Thiolesterase that catalyzes the hydrolysis of S-D-lactoyl-glutathione to form glutathione and D-lactic acid. The protein is Hydroxyacylglutathione hydrolase of Bartonella tribocorum (strain CIP 105476 / IBS 506).